A 107-amino-acid polypeptide reads, in one-letter code: Insulin-like peptide 6 (107 aa).

The first 33 residues, 1-33 (MVLKVPTSKVLLVLATLFAVAAMISSWMPQVAA), serve as a signal peptide directing secretion. Disulfide bonds link Cys-48/Cys-91, Cys-60/Cys-105, and Cys-90/Cys-96. Residues 67-76 (LGDVFPNSFG) constitute a propeptide, connecting peptide.

The protein belongs to the insulin family. In terms of assembly, heterodimer of a B chain and an A chain linked by two disulfide bonds. As to expression, expressed at a low level in the larval gut.

It is found in the secreted. Functionally, possible ligand of InR/insulin-like receptor. The sequence is that of Insulin-like peptide 6 from Drosophila melanogaster (Fruit fly).